The primary structure comprises 241 residues: Uridylate kinase (241 aa).

12–15 (KVSG) is a binding site for ATP. The involved in allosteric activation by GTP stretch occupies residues 20 to 25 (GEKGTG). G54 provides a ligand contact to UMP. Residues G55 and R59 each contribute to the ATP site. UMP is bound by residues D74 and 135 to 142 (TGNPYFST). The ATP site is built by N163, Y169, and D172.

The protein belongs to the UMP kinase family. Homohexamer.

The protein resides in the cytoplasm. The catalysed reaction is UMP + ATP = UDP + ADP. The protein operates within pyrimidine metabolism; CTP biosynthesis via de novo pathway; UDP from UMP (UMPK route): step 1/1. With respect to regulation, allosterically activated by GTP. Inhibited by UTP. Catalyzes the reversible phosphorylation of UMP to UDP. This Lactobacillus johnsonii (strain CNCM I-12250 / La1 / NCC 533) protein is Uridylate kinase.